Reading from the N-terminus, the 394-residue chain is Elongation factor Tu (394 aa).

A tr-type G domain is found at 10–204 (KPHVNVGTIG…ALDSYIPEPE (195 aa)). Positions 19 to 26 (GHVDHGKT) are G1. 19-26 (GHVDHGKT) provides a ligand contact to GTP. Thr-26 lines the Mg(2+) pocket. The G2 stretch occupies residues 60–64 (GITIA). Positions 81 to 84 (DCPG) are G3. GTP is bound by residues 81–85 (DCPGH) and 136–139 (NKCD). The segment at 136 to 139 (NKCD) is G4. The G5 stretch occupies residues 174 to 176 (SAL).

The protein belongs to the TRAFAC class translation factor GTPase superfamily. Classic translation factor GTPase family. EF-Tu/EF-1A subfamily. In terms of assembly, monomer.

The protein localises to the cytoplasm. The catalysed reaction is GTP + H2O = GDP + phosphate + H(+). GTP hydrolase that promotes the GTP-dependent binding of aminoacyl-tRNA to the A-site of ribosomes during protein biosynthesis. This chain is Elongation factor Tu, found in Vibrio campbellii (strain ATCC BAA-1116).